The following is a 494-amino-acid chain: Maintenance of mitochondrial morphology protein 1 (494 aa).

The Lumenal portion of the chain corresponds to 1-25; sequence MGDDQSLRSTVAENDISANLSFTQG. The chain crosses the membrane as a helical span at residues 26–46; it reads FLLGQLSVVLLIGAFIKFFIF. The Cytoplasmic segment spans residues 47–494; the sequence is GEAPPPPSRG…GTLPGGAAAN (448 aa). Disordered regions lie at residues 53-99, 278-330, and 395-494; these read PSRG…VPSS, PPLH…KSNV, and RTGV…AAAN. A compositionally biased stretch (basic residues) spans 57–67; that stretch reads LSHRASTHRRS. Composition is skewed to polar residues over residues 68-81 and 88-99; these read NSIY…GTSR and STSNVLRPVPSS. The 254-residue stretch at 134–387 folds into the SMP-LTD domain; the sequence is QPESLDWFNV…EPRVQVVGLP (254 aa). Over residues 278 to 290 the composition is skewed to pro residues; it reads PPLHTPSPSPSPP. Composition is skewed to polar residues over residues 300–318 and 406–415; these read THPT…NAQE and TGSNAASRSA. Residues 425–437 show a composition bias toward basic and acidic residues; the sequence is RADDIGREPDGLR.

Belongs to the MMM1 family. Homodimer. Component of the ER-mitochondria encounter structure (ERMES) or MDM complex, composed of mmm1, mdm10, mdm12 and mdm34. A mmm1 homodimer associates with one molecule of mdm12 on each side in a pairwise head-to-tail manner, and the SMP-LTD domains of mmm1 and mdm12 generate a continuous hydrophobic tunnel for phospholipid trafficking.

The protein resides in the endoplasmic reticulum membrane. In terms of biological role, component of the ERMES/MDM complex, which serves as a molecular tether to connect the endoplasmic reticulum (ER) and mitochondria. Components of this complex are involved in the control of mitochondrial shape and protein biogenesis, and function in nonvesicular lipid trafficking between the ER and mitochondria. The mdm12-mmm1 subcomplex functions in the major beta-barrel assembly pathway that is responsible for biogenesis of all outer membrane beta-barrel proteins, and acts in a late step after the SAM complex. The mdm10-mdm12-mmm1 subcomplex further acts in the TOM40-specific pathway after the action of the mdm12-mmm1 complex. Essential for establishing and maintaining the structure of mitochondria and maintenance of mtDNA nucleoids. The chain is Maintenance of mitochondrial morphology protein 1 from Aspergillus oryzae (strain ATCC 42149 / RIB 40) (Yellow koji mold).